The primary structure comprises 130 residues: Small ribosomal subunit protein uS8 (130 aa).

This sequence belongs to the universal ribosomal protein uS8 family. As to quaternary structure, part of the 30S ribosomal subunit. Contacts proteins S5 and S12.

Its function is as follows. One of the primary rRNA binding proteins, it binds directly to 16S rRNA central domain where it helps coordinate assembly of the platform of the 30S subunit. The sequence is that of Small ribosomal subunit protein uS8 from Salmonella arizonae (strain ATCC BAA-731 / CDC346-86 / RSK2980).